The chain runs to 195 residues: Putative lysine exporter (195 aa).

The next 6 helical transmembrane spans lie at 4–24 (LLSA…WLHF), 30–50 (LYVL…NGIS), 61–81 (LMMG…SAFF), 86–106 (ITQG…SVVL), 117–137 (IAFF…PLFM), and 170–190 (PIAI…LVFF).

It belongs to the LysO family.

It localises to the cell inner membrane. Mediates export of lysine. The protein is Putative lysine exporter of Haemophilus influenzae (strain ATCC 51907 / DSM 11121 / KW20 / Rd).